The sequence spans 312 residues: Probable phytanoyl-CoA dioxygenase (312 aa).

2-oxoglutarate contacts are provided by residues K84, M124, 142–144 (HQD), and W160. H142 and D144 together coordinate Fe cation. Residue H231 participates in Fe cation binding. 2-oxoglutarate is bound by residues S233 and R242.

This sequence belongs to the PhyH family. It depends on Fe cation as a cofactor. L-ascorbate serves as cofactor.

The catalysed reaction is phytanoyl-CoA + 2-oxoglutarate + O2 = 2-hydroxyphytanoyl-CoA + succinate + CO2. Its pathway is lipid metabolism; fatty acid metabolism. Its function is as follows. Converts phytanoyl-CoA to 2-hydroxyphytanoyl-CoA. This Caenorhabditis elegans protein is Probable phytanoyl-CoA dioxygenase.